Here is a 216-residue protein sequence, read N- to C-terminus: Pyridoxine/pyridoxamine 5'-phosphate oxidase (216 aa).

Residues 63-68 (RMVLMK), 78-79 (YS), lysine 85, and glutamine 107 each bind FMN. Lysine 68 contributes to the substrate binding site. Positions 125 and 129 each coordinate substrate. FMN-binding positions include 142-143 (QS) and tryptophan 187. 193 to 195 (RLH) contacts substrate. FMN is bound at residue arginine 197.

The protein belongs to the pyridoxamine 5'-phosphate oxidase family. Homodimer. Requires FMN as cofactor.

The enzyme catalyses pyridoxamine 5'-phosphate + O2 + H2O = pyridoxal 5'-phosphate + H2O2 + NH4(+). The catalysed reaction is pyridoxine 5'-phosphate + O2 = pyridoxal 5'-phosphate + H2O2. It functions in the pathway cofactor metabolism; pyridoxal 5'-phosphate salvage; pyridoxal 5'-phosphate from pyridoxamine 5'-phosphate: step 1/1. The protein operates within cofactor metabolism; pyridoxal 5'-phosphate salvage; pyridoxal 5'-phosphate from pyridoxine 5'-phosphate: step 1/1. Catalyzes the oxidation of either pyridoxine 5'-phosphate (PNP) or pyridoxamine 5'-phosphate (PMP) into pyridoxal 5'-phosphate (PLP). In Bradyrhizobium sp. (strain BTAi1 / ATCC BAA-1182), this protein is Pyridoxine/pyridoxamine 5'-phosphate oxidase.